Consider the following 307-residue polypeptide: Taste receptor type 2 member 41 (307 aa).

The Extracellular portion of the chain corresponds to 1–7; it reads MQAALMA. The chain crosses the membrane as a helical span at residues 8–28; that stretch reads FFMLLFSLLSLLGIAANGFIV. The Cytoplasmic segment spans residues 29-40; it reads LVLGREWLRYGR. The helical transmembrane segment at 41-61 threads the bilayer; the sequence is LLPLDMILISLGASRXCLQLV. The Extracellular segment spans residues 62–88; it reads GTVHNFYYSARKVEYSGGLGRQFFHLH. Residues 89-109 traverse the membrane as a helical segment; it reads WHFLNSATFWFCSWLSVLFCV. The Cytoplasmic portion of the chain corresponds to 110–129; that stretch reads KIANITHPTFLWLKWRFPGW. The chain crosses the membrane as a helical span at residues 130–150; sequence VPWLLLGSVLISFIITLLFFW. At 151-183 the chain is on the extracellular side; that stretch reads VNYPVYQELLIRKFSGNMTYKWNTRIETYYFPS. A glycan (N-linked (GlcNAc...) asparagine) is linked at N167. Residues 184–204 traverse the membrane as a helical segment; that stretch reads LKLVIWSIPFSVFLVSIMLLI. Residues 205-234 lie on the Cytoplasmic side of the membrane; the sequence is NSLRRHTQRMQHNGHSLQDPSTQAHTRALK. Residues 235–255 form a helical membrane-spanning segment; that stretch reads SLISFLFLYALSFLSLIIDAT. The Extracellular portion of the chain corresponds to 256–264; it reads KFISMQNDF. Residues 265–285 traverse the membrane as a helical segment; sequence YWPWQIAVYLCISVHPFILIF. Over 286-307 the chain is Cytoplasmic; sequence SNLKLRSMFWQVLLLARGFWVA.

This sequence belongs to the G-protein coupled receptor T2R family.

The protein resides in the membrane. Its function is as follows. Receptor that may play a role in the perception of bitterness and is gustducin-linked. May play a role in sensing the chemical composition of the gastrointestinal content. The activity of this receptor may stimulate alpha gustducin, mediate PLC-beta-2 activation and lead to the gating of TRPM5. The polypeptide is Taste receptor type 2 member 41 (TAS2R41) (Gorilla gorilla gorilla (Western lowland gorilla)).